A 31-amino-acid chain; its full sequence is Zinc metalloproteinase alsophinase (31 aa).

Residue Q1 is modified to Pyrrolidone carboxylic acid. In terms of domain architecture, Peptidase M12B spans 9–31 (KYIEFYLVVDNGMFXKYSXXFTV). Ca(2+) is bound at residue E12.

In terms of assembly, monomer. Zn(2+) serves as cofactor. Post-translationally, contains 9 disulfide bonds. As to expression, expressed by the venom gland.

Its subcellular location is the secreted. Its activity is regulated as follows. Inhibited by 1,10-phenanthroline. Its function is as follows. Snake venom zinc metalloprotease that has potent hemorrhagic activity, fibrinogenolytic activity on the alpha-subunit of human fibrinogen (FGA) in vitro and provokes necrosis in skin, muscle and lung tissues. May contribute to local edema and ecchymosis induced by venom. Hydrolyzes model substrate (beta-chain of insulin) at Ala(14)-Leu(15). This Borikenophis portoricensis (Puerto Rican racer) protein is Zinc metalloproteinase alsophinase.